A 547-amino-acid polypeptide reads, in one-letter code: Putative nitric oxide synthase (547 aa).

Over residues 24-40 (QLAPNPSSFSPTRAAST) the composition is skewed to low complexity. Disordered regions lie at residues 24–57 (QLAP…SRGD) and 72–91 (VLAP…RKAL). The span at 81–91 (RRRRREKRKAL) shows a compositional bias: basic residues. Positions 167–343 (ADQLRDKLSY…LYDTPGVHLH (177 aa)) constitute a CP-type G domain.

The protein belongs to the TRAFAC class YlqF/YawG GTPase family. NOA1 subfamily.

The enzyme catalyses 2 L-arginine + 3 NADPH + 4 O2 + H(+) = 2 L-citrulline + 2 nitric oxide + 3 NADP(+) + 4 H2O. Functionally, produces nitric oxide (NO) which is a messenger molecule involved in hormonal signaling and defense responses in plant. This Oryza sativa subsp. japonica (Rice) protein is Putative nitric oxide synthase.